A 350-amino-acid chain; its full sequence is Small ribosomal subunit biogenesis GTPase RsgA (350 aa).

Positions 1-17 (MSKNKLSKGQQRRVNAN) are enriched in polar residues. The interval 1 to 33 (MSKNKLSKGQQRRVNANHQRRLKTSKEKPDYDD) is disordered. Residues 104-273 (TSVLTRPDFY…VIDSPGVREF (170 aa)) form the CP-type G domain. Residues 160-163 (NKID) and 214-222 (GQSGVGKSS) contribute to the GTP site. Zn(2+) contacts are provided by cysteine 297, cysteine 302, histidine 304, and cysteine 310.

Belongs to the TRAFAC class YlqF/YawG GTPase family. RsgA subfamily. As to quaternary structure, monomer. Associates with 30S ribosomal subunit, binds 16S rRNA. Requires Zn(2+) as cofactor.

It is found in the cytoplasm. Its function is as follows. One of several proteins that assist in the late maturation steps of the functional core of the 30S ribosomal subunit. Helps release RbfA from mature subunits. May play a role in the assembly of ribosomal proteins into the subunit. Circularly permuted GTPase that catalyzes slow GTP hydrolysis, GTPase activity is stimulated by the 30S ribosomal subunit. The protein is Small ribosomal subunit biogenesis GTPase RsgA of Shigella flexneri.